The chain runs to 298 residues: tRNA(Met) cytidine acetate ligase (298 aa).

Residues I6–Q19, G100, N157, and R182 each bind ATP.

It belongs to the TmcAL family.

It localises to the cytoplasm. It catalyses the reaction cytidine(34) in elongator tRNA(Met) + acetate + ATP = N(4)-acetylcytidine(34) in elongator tRNA(Met) + AMP + diphosphate. In terms of biological role, catalyzes the formation of N(4)-acetylcytidine (ac(4)C) at the wobble position of elongator tRNA(Met), using acetate and ATP as substrates. First activates an acetate ion to form acetyladenylate (Ac-AMP) and then transfers the acetyl group to tRNA to form ac(4)C34. The polypeptide is tRNA(Met) cytidine acetate ligase (Mycoplasmopsis pulmonis (strain UAB CTIP) (Mycoplasma pulmonis)).